Here is a 30-residue protein sequence, read N- to C-terminus: Cyclotide hyen-L (30 aa).

Positions 1-30 form a cross-link, cyclopeptide (Gly-Asn); that stretch reads GIPCAESCVYIPCTVTALLGCSCSDKVCYN. 3 disulfides stabilise this stretch: C4–C21, C8–C23, and C13–C28.

This is a cyclic peptide. Detected in stems (at protein level).

Its function is as follows. Probably participates in a plant defense mechanism. Has cytotoxic activity against HUVEC cells (LC(50)= 2.26 uM) and various cancer cells including HeLa (LC(50)= 3.48 uM), MCF-7 and K562. Displays very weak hemolytic activity. Binds to and induces leakage in phospholipd membranes, particularly ones containing 1-palmitoyl-2-oleophosphatidylethanolamine (POPE). The chain is Cyclotide hyen-L from Pigea enneasperma (Spade flower).